The sequence spans 657 residues: Glycogen debranching enzyme (657 aa).

The active-site Nucleophile is Asp-336. The active-site Proton donor is Glu-371. Positions 460–479 (ANGEENRDGTNNNYSNNHGK) are disordered.

It belongs to the glycosyl hydrolase 13 family.

It carries out the reaction Hydrolysis of (1-&gt;6)-alpha-D-glucosidic linkages to branches with degrees of polymerization of three or four glucose residues in limit dextrin.. The protein operates within glycan degradation; glycogen degradation. Removes maltotriose and maltotetraose chains that are attached by 1,6-alpha-linkage to the limit dextrin main chain, generating a debranched limit dextrin. The chain is Glycogen debranching enzyme from Escherichia coli (strain UTI89 / UPEC).